Here is a 253-residue protein sequence, read N- to C-terminus: Protein C1orf43 (253 aa).

The chain crosses the membrane as a helical span at residues 11–31; it reads VNVVLVMAYGSLVFVLLFIFV.

Its subcellular location is the membrane. The protein resides in the golgi apparatus. The protein localises to the mitochondrion. In terms of biological role, general regulator of phagocytosis. Required to uptake Gram negative bacterium by macrophages. This Homo sapiens (Human) protein is Protein C1orf43 (C1orf43).